The sequence spans 195 residues: Penicillin-binding protein activator LpoB (195 aa).

Residues methionine 1–glycine 16 form the signal peptide. Residue cysteine 17 is the site of N-palmitoyl cysteine attachment. Cysteine 17 carries the S-diacylglycerol cysteine lipid modification. A disordered region spans residues serine 19–proline 55. Pro residues-rich tracts occupy residues proline 24 to proline 38 and proline 44 to proline 55.

The protein belongs to the LpoB family. Interacts with PBP1b.

Its subcellular location is the cell outer membrane. Functionally, regulator of peptidoglycan synthesis that is essential for the function of penicillin-binding protein 1B (PBP1b). The sequence is that of Penicillin-binding protein activator LpoB from Serratia proteamaculans (strain 568).